The sequence spans 155 residues: Anaerobic ribonucleoside-triphosphate reductase-activating protein (155 aa).

Residues Cys26, Cys30, and Cys33 each coordinate [4Fe-4S] cluster. S-adenosyl-L-methionine contacts are provided by residues 32-34 and Gly74; that span reads GCY.

The protein belongs to the organic radical-activating enzymes family. In terms of assembly, forms a tetramer composed of two NrdD and two NrdG subunits. [4Fe-4S] cluster serves as cofactor.

It is found in the cytoplasm. It carries out the reaction glycyl-[protein] + reduced [flavodoxin] + S-adenosyl-L-methionine = glycin-2-yl radical-[protein] + semiquinone [flavodoxin] + 5'-deoxyadenosine + L-methionine + H(+). Functionally, activation of anaerobic ribonucleoside-triphosphate reductase under anaerobic conditions by generation of an organic free radical, using S-adenosylmethionine and reduced flavodoxin as cosubstrates to produce 5'-deoxy-adenosine. The sequence is that of Anaerobic ribonucleoside-triphosphate reductase-activating protein (nrdG) from Vibrio cholerae serotype O1 (strain ATCC 39315 / El Tor Inaba N16961).